Here is a 552-residue protein sequence, read N- to C-terminus: Urocanate hydratase (552 aa).

NAD(+) is bound by residues 50 to 51 (GG), glutamine 128, 174 to 176 (GMG), glutamate 194, arginine 199, 261 to 265 (QTSAH), 271 to 272 (YI), and tyrosine 320. Cysteine 408 is an active-site residue. NAD(+) is bound at residue glycine 490.

Belongs to the urocanase family. NAD(+) serves as cofactor.

It localises to the cytoplasm. The catalysed reaction is 4-imidazolone-5-propanoate = trans-urocanate + H2O. It functions in the pathway amino-acid degradation; L-histidine degradation into L-glutamate; N-formimidoyl-L-glutamate from L-histidine: step 2/3. In terms of biological role, catalyzes the conversion of urocanate to 4-imidazolone-5-propionate. The protein is Urocanate hydratase of Bdellovibrio bacteriovorus (strain ATCC 15356 / DSM 50701 / NCIMB 9529 / HD100).